The chain runs to 310 residues: tRNA dimethylallyltransferase (310 aa).

ATP is bound at residue 10-17 (GPTAVGKS). 12–17 (TAVGKS) is a substrate binding site. The interaction with substrate tRNA stretch occupies residues 35–38 (DSMQ).

This sequence belongs to the IPP transferase family. Monomer. Mg(2+) is required as a cofactor.

The enzyme catalyses adenosine(37) in tRNA + dimethylallyl diphosphate = N(6)-dimethylallyladenosine(37) in tRNA + diphosphate. In terms of biological role, catalyzes the transfer of a dimethylallyl group onto the adenine at position 37 in tRNAs that read codons beginning with uridine, leading to the formation of N6-(dimethylallyl)adenosine (i(6)A). The sequence is that of tRNA dimethylallyltransferase from Clostridium perfringens (strain 13 / Type A).